Consider the following 215-residue polypeptide: MLDREGFRPNVGIILLNARNEVFWGKRLREHSWQFPQGGIKYGETPMQAMYRELHEETGLLPEHVKIIGRTRDWLRYEVPDKFIKREVRGHYRGQKQIWFLLRMLGRDCDICLRATDHPEFDAWRWNEYWVPLDAVIEFKRDVYQLALTELSRFLRRPAQRADKPRGPRLPRYPRVIAAQPAETLTIVDTSVVCSEVEVEASTLDEMPPRVIVGK.

A Nudix hydrolase domain is found at 6-149 (GFRPNVGIIL…KRDVYQLALT (144 aa)). A Nudix box motif is present at residues 38–59 (GGIKYGETPMQAMYRELHEETG).

The protein belongs to the Nudix hydrolase family. RppH subfamily. The cofactor is a divalent metal cation.

Accelerates the degradation of transcripts by removing pyrophosphate from the 5'-end of triphosphorylated RNA, leading to a more labile monophosphorylated state that can stimulate subsequent ribonuclease cleavage. This Burkholderia multivorans (strain ATCC 17616 / 249) protein is RNA pyrophosphohydrolase.